The sequence spans 480 residues: Citrate synthase 1, peroxisomal (480 aa).

Catalysis depends on residues H321, H360, and D416.

It belongs to the citrate synthase family. In terms of tissue distribution, expressed only in siliques. Not expressed in flower, stem, cauline leaf, young leaf, mature leaf and senescent leaf.

The protein resides in the peroxisome. The catalysed reaction is oxaloacetate + acetyl-CoA + H2O = citrate + CoA + H(+). It functions in the pathway carbohydrate metabolism; tricarboxylic acid cycle; isocitrate from oxaloacetate: step 1/2. This is Citrate synthase 1, peroxisomal (CSY1) from Arabidopsis thaliana (Mouse-ear cress).